A 1259-amino-acid chain; its full sequence is MDASEEPLPPVIYTMENKPIVTCAGDQNLFTSVYPTLSQQLPREPMEWRRSYGRAPKMIHLESNFVQFKEELLPKEGNKALLTFPFLHIYWTECCDTEVYKATVKDDLTKWQNVLKAHSSVDWLIVIVENDAKKKNKTNILPRTSIVDKIRNDFCNKQSDRCVVLSDPLKDSSRTQESWNAFLTKLRTLLLMSFTKNLGKFEDDMRTLREKRTEPGWSFCEYFMVQEELAFVFEMLQQFEDALVQYDELDALFSQYVVNFGAGDGANWLTFFCQPVKSWNGLILRKPIDMEKRESIQRREATLLDLRSYLFSRQCTLLLFLQRPWEVAQRALELLHNCVQELKLLEVSVPPGALDCWVFLSCLEVLQRIEGCCDRAQIDSNIAHTVGLWSYATEKLKSLGYLCGLVSEKGPNSEDLNRTVDLLAGLGAERPETANTAQSPYKKLKEALSSVEAFEKHYLDLSHATIEMYTSIGRIRSAKFVGKDLAEFYMRKKAPQKAEIYLQGALKNYLAEGWALPITHTRKQLAECQKHLGQIENYLQTSSLLASDHHLTEEERKHFCQEILDFASQPSDSPGHKIVLPMHSFAQLRDLHFDPSNAVVHVGGVLCVEITMYSQMPVPVHVEQIVVNVHFSIEKNSYRKTAEWLTKHKTSNGIINFPPETAPFPVSQNSLPALELYEMFERSPSDNSLNTTGIICRNVHMLLRRQESSSSLEMPSGVALEEGAHVLRCSHVTLEPGANQITFRTQAKEPGTYTLRQLCASVGSVWFVLPHIYPIVQYDVYSQEPQLHVEPLADSLLAGIPQRVKFTVTTGHYTIKNGDSLQLSNAEAMLILCQAESRAVVYSNTREQSSEAALRIQSSDKVTSISLPVAPAYHVIEFELEVLSLPSAPALGGESDMLGMAEPHRKHKDKQRTGRCMVTTDHKVSIDCPWSIYSTVIALTFSVPFRTTHSLLSSGTRKYVQVCVQNLSELDFQLSDSYLVDTGDSTDLQLVPLNTQSQQPIYSKQSVFFVWELKWTEEPPPSLHCRFSVGFSPASEEQLSISLKPYTYEFKVENFFTLYNVKAEIFPPSGMEYCRTGSLCSLEVLITRLSDLLEVDKDEALTESDEHFSTKLMYEVVDNSSNWAVCGKSCGVISMPVAARATHRVHMEVMPLFAGYLPLPDVRLFKYLPHHSAHSSQLDADSWIENDSLSVDKHGDDQPDSSSLKSRGSVHSACSSEHKGLPMPRLQALPAGQVFNSSSGTQVLVIPSQDDHVLEVSVT.

S708 carries the phosphoserine modification. Residues 1189-1222 (LSVDKHGDDQPDSSSLKSRGSVHSACSSEHKGLP) are disordered.

It belongs to the TRAPPC10 family. As to quaternary structure, specific component of the multisubunit TRAPP II complex, which includes at least TRAPPC1, TRAPPC2, TRAPPC3, TRAPPC4, TRAPPC5, TRAPPC6A/B, TRAPPC9, TRAPPC10 and TRAPPC14. TRAPPC9, TRAPPC10 and TRAPPC14 are specific subunits of the TRAPP II complex. Interacts with TRAPPC14. In terms of tissue distribution, expressed in all tissues examined.

Its subcellular location is the golgi apparatus. It localises to the cis-Golgi network. Functionally, specific subunit of the TRAPP (transport protein particle) II complex, a highly conserved vesicle tethering complex that functions in late Golgi trafficking as a membrane tether. The sequence is that of Trafficking protein particle complex subunit 10 (TRAPPC10) from Homo sapiens (Human).